The following is a 197-amino-acid chain: Ribonuclease HII (197 aa).

Residues 14-197 enclose the RNase H type-2 domain; it reads EKIVGIDEAG…RSFNLGVNDD (184 aa). Residues aspartate 20, glutamate 21, and aspartate 112 each contribute to the a divalent metal cation site.

Belongs to the RNase HII family. The cofactor is Mn(2+). It depends on Mg(2+) as a cofactor.

It localises to the cytoplasm. The enzyme catalyses Endonucleolytic cleavage to 5'-phosphomonoester.. Endonuclease that specifically degrades the RNA of RNA-DNA hybrids. The polypeptide is Ribonuclease HII (Sulfurihydrogenibium sp. (strain YO3AOP1)).